A 550-amino-acid chain; its full sequence is Hydroxylamine reductase (550 aa).

[2Fe-2S] cluster-binding residues include Cys3, Cys6, Cys18, and Cys25. Residues His249, Glu273, Cys317, Cys405, Cys433, Cys458, Glu492, and Lys494 each contribute to the hybrid [4Fe-2O-2S] cluster site. Cys405 bears the Cysteine persulfide mark.

It belongs to the HCP family. It depends on [2Fe-2S] cluster as a cofactor. Requires hybrid [4Fe-2O-2S] cluster as cofactor.

The protein resides in the cytoplasm. The catalysed reaction is A + NH4(+) + H2O = hydroxylamine + AH2 + H(+). Catalyzes the reduction of hydroxylamine to form NH(3) and H(2)O. This is Hydroxylamine reductase from Salmonella agona (strain SL483).